The chain runs to 66 residues: Surface composition regulator (66 aa).

It belongs to the GlgS family.

Major determinant of cell surface composition. Negatively regulates motility, adhesion and synthesis of biofilm exopolysaccharides. The chain is Surface composition regulator from Escherichia coli O127:H6 (strain E2348/69 / EPEC).